The chain runs to 562 residues: MNTNDAKEYLARRDIPQLFESLLNGLMCSKPEDPIEYLETCLQKVKELGGCDKVKWDTFVSQEKKTLPPLNGGQSRRSFLRNVMPENSNFPYRRYDRLPPIHQFSIESDTDLSETAELIEEYEVFDPTRPRPKIILVIGGPGSGKGTQSLKIAERYGFQYISVGELLRKKIHSASSNRKWSLIAKIITNGELAPQETTITEIKQKLMQIPDEEGIVIDGFPRDVAQALSFEDQICTPDLVVFLACANQRLKERLQKRAEQQGRPDDNLKATQRRLVNFKQNAAPLVKYFQEKGLIVTFDADRDEDAVFHDISVAVDSKLFPNKEAPMDSSDLDPSMMFDAGEIIDTGSDYDNQDDDQLNVFGEDTEGGFMEDLRKCKIIFLMGGPGSGKGTQCEKLAEKYGFTHLSTGELLRQELTSESERSKLIRDIMERGDLVPSGVVLELLKEAMVASLGNTKGFLIDGYPREVKQGEEFGRRIGDPHLVICMDCSADTMTNRLLQRSQSSQRGEDGAKSIAKRLEAYHRASIPVVTYYERKTQLRKVNAEGTPEQVFLQLCTAIDSVF.

Adenylate kinase regions lie at residues 133–316 (KIIL…VAVD) and 377–559 (KIIF…TAID). An ATP-binding site is contributed by 142–147 (GSGKGT). Residues 162–193 (SVGELLRKKIHSASSNRKWSLIAKIITNGELA) are NMP 1. AMP is bound by residues Arg168, 191–193 (ELA), 219–222 (GFPR), and Gln226. The segment at 256–266 (KRAEQQGRPDD) is LID 1. Residue Arg257 participates in ATP binding. Arg263 and Arg274 together coordinate AMP. 386 to 391 (GSGKGT) contacts ATP. Residues 406–435 (STGELLRQELTSESERSKLIRDIMERGDLV) are NMP 2. AMP contacts are provided by residues Thr407, Arg412, 433-435 (DLV), 462-465 (GYPR), and Gln469. Positions 499–509 (QRSQSSQRGED) are LID 2. Position 500 (Arg500) interacts with ATP. AMP-binding residues include Arg506 and Arg517. Gly545 is a binding site for ATP.

This sequence belongs to the adenylate kinase family. As to quaternary structure, monomer. Interacts with YWHAZ. As to expression, brain specific.

It is found in the cytoplasm. It carries out the reaction AMP + ATP = 2 ADP. It catalyses the reaction a 2'-deoxyribonucleoside 5'-diphosphate + ATP = a 2'-deoxyribonucleoside 5'-triphosphate + ADP. The catalysed reaction is a ribonucleoside 5'-diphosphate + ATP = a ribonucleoside 5'-triphosphate + ADP. In terms of biological role, nucleoside monophosphate (NMP) kinase that catalyzes the reversible transfer of the terminal phosphate group between nucleoside triphosphates and monophosphates. Active on AMP and dAMP with ATP as a donor. When GTP is used as phosphate donor, the enzyme phosphorylates AMP, CMP, and to a small extent dCMP. Also displays broad nucleoside diphosphate kinase activity. The chain is Adenylate kinase isoenzyme 5 (Ak5) from Mus musculus (Mouse).